Consider the following 306-residue polypeptide: UDP-N-acetylenolpyruvoylglucosamine reductase (306 aa).

Residues 34-198 (VGGPADLLIT…LEVTFKLHNS (165 aa)) form the FAD-binding PCMH-type domain. Residue Arg177 is part of the active site. Residue Ser227 is the Proton donor of the active site. Residue Glu297 is part of the active site.

It belongs to the MurB family. Requires FAD as cofactor.

The protein resides in the cytoplasm. It carries out the reaction UDP-N-acetyl-alpha-D-muramate + NADP(+) = UDP-N-acetyl-3-O-(1-carboxyvinyl)-alpha-D-glucosamine + NADPH + H(+). It participates in cell wall biogenesis; peptidoglycan biosynthesis. Its function is as follows. Cell wall formation. In Clostridium botulinum (strain ATCC 19397 / Type A), this protein is UDP-N-acetylenolpyruvoylglucosamine reductase.